Reading from the N-terminus, the 520-residue chain is Peptide chain release factor 3 (520 aa).

The tr-type G domain maps to 8 to 277 (ESRKTFAIIS…FAPMPNARQT (270 aa)). Residues 17–24 (SHPDAGKT), 85–89 (DTPGH), and 139–142 (NKLD) each bind GTP.

The protein belongs to the TRAFAC class translation factor GTPase superfamily. Classic translation factor GTPase family. PrfC subfamily.

It localises to the cytoplasm. Functionally, increases the formation of ribosomal termination complexes and stimulates activities of RF-1 and RF-2. It binds guanine nucleotides and has strong preference for UGA stop codons. It may interact directly with the ribosome. The stimulation of RF-1 and RF-2 is significantly reduced by GTP and GDP, but not by GMP. The protein is Peptide chain release factor 3 of Staphylococcus aureus (strain USA300 / TCH1516).